We begin with the raw amino-acid sequence, 207 residues long: Sodium/potassium-transporting ATPase subunit beta-1-interacting protein 1 (207 aa).

Positions 1–21 are cleaved as a signal peptide; sequence MGKCSGRCTLVAFCCLQLVAA. At 22–34 the chain is on the extracellular side; it reads LERQIFDFLGYQW. A helical transmembrane segment spans residues 35-55; that stretch reads APILANFLHIMAVILGIFGTV. Residues 56–61 lie on the Cytoplasmic side of the membrane; it reads QYRSRY. The chain crosses the membrane as a helical span at residues 62 to 82; it reads LILYAAWLVLWVGWNAFIICF. Residues 83 to 146 are Extracellular-facing; sequence YLEVGQLSQD…GCLLDYPYIE (64 aa). N-linked (GlcNAc...) asparagine glycosylation is present at Asn100. Residues 147–167 traverse the membrane as a helical segment; the sequence is ALSSALQIFLALFGFVFACYV. The Cytoplasmic segment spans residues 168 to 207; that stretch reads SKVFLEEEDSFDFIGGFDSYGYQAPQKTSHLQLQPLYTSG.

The protein belongs to the NKAIN family. As to quaternary structure, interacts with ATP1B1 C-terminus.

The protein localises to the cell membrane. This is Sodium/potassium-transporting ATPase subunit beta-1-interacting protein 1 (NKAIN1) from Homo sapiens (Human).